The chain runs to 178 residues: MIITIGGLPGTGTTTIAKMIAEKYNLRHVCAGFIFREMAKEMGMDLQEFSKYAEQHKEIDEEIDRRQVEIAKQGNVVLEGRLAAWMLLKNGIKPDLTIWFKAPLEVRAERISKRENIDKDVALKKMIEREASEKKRYKEIYNIDLDDLSIYDLVIDTSKWDVEGVFNIVSSAIDNLKK.

7–15 lines the ATP pocket; sequence GLPGTGTTT.

This sequence belongs to the cytidylate kinase family. Type 2 subfamily.

It localises to the cytoplasm. The catalysed reaction is CMP + ATP = CDP + ADP. It catalyses the reaction dCMP + ATP = dCDP + ADP. This is Cytidylate kinase (cmk) from Methanocaldococcus jannaschii (strain ATCC 43067 / DSM 2661 / JAL-1 / JCM 10045 / NBRC 100440) (Methanococcus jannaschii).